The chain runs to 60 residues: Acrosin (60 aa).

Asparagine 3 is a glycosylation site (N-linked (GlcNAc...) asparagine). The region spanning 24-60 (IIGGQDAAHGSWPWMVSLQIFTYHNNRRYHVCGGSLL) is the Peptidase S1 domain.

This sequence belongs to the peptidase S1 family. Heavy chain (catalytic) and a light chain linked by two disulfide bonds. Forms a heterodimer with SERPINA5.

It catalyses the reaction Preferential cleavage: Arg-|-Xaa, Lys-|-Xaa.. Inhibited by SERPINA5. In terms of biological role, acrosin is the major protease of mammalian spermatozoa. It is a serine protease of trypsin-like cleavage specificity, it is synthesized in a zymogen form, proacrosin and stored in the acrosome. The protein is Acrosin (ACR) of Capra hircus (Goat).